The primary structure comprises 365 residues: Sesquiterpene synthase 3 (365 aa).

4 residues coordinate Mg(2+): D117, N253, S257, and E261. Residues 117-121 (DDWSD) carry the DDXXD motif motif. An NSE/DTE motif motif is present at residues 253 to 261 (NDILSYNRE). Residues R341 and Y342 each contribute to the (2E,6E)-farnesyl diphosphate site.

The protein belongs to the terpene synthase family. It depends on Mg(2+) as a cofactor.

The enzyme catalyses (2E,6E)-farnesyl diphosphate = delta-cadinene + diphosphate. Its function is as follows. Terpene cyclase that catalyzes the cyclization of farnesyl diphosphate (FPP) to various sesquiterpenes, including beta-elemene gamma-cadinene, delta-cadinene, and alpha-cadinene. The protein is Sesquiterpene synthase 3 of Postia placenta (strain ATCC 44394 / Madison 698-R) (Brown rot fungus).